The following is a 673-amino-acid chain: B3 domain-containing protein Os01g0905400 (673 aa).

Positions methionine 1–glutamate 34 are enriched in basic and acidic residues. Positions methionine 1–serine 44 are disordered. Positions leucine 79–serine 172 form a DNA-binding region, TF-B3 1. The tract at residues proline 315–glutamine 337 is disordered. Positions alanine 328–glutamine 337 are enriched in basic and acidic residues. The segment at residues serine 576–asparagine 671 is a DNA-binding region (TF-B3 2).

It localises to the nucleus. The sequence is that of B3 domain-containing protein Os01g0905400 from Oryza sativa subsp. japonica (Rice).